Consider the following 721-residue polypeptide: Polyribonucleotide nucleotidyltransferase (721 aa).

Residues Asp490 and Asp496 each contribute to the Mg(2+) site. The region spanning 557–623 (PRIISIKINP…RIAGLTKEAK (67 aa)) is the KH domain. The 69-residue stretch at 625–693 (GEEYEGTVVK…DRGKIDLIRP (69 aa)) folds into the S1 motif domain. A disordered region spans residues 693 to 721 (PELEGKIAPREPRAPRGGGDRGPRPPRRD).

This sequence belongs to the polyribonucleotide nucleotidyltransferase family. It depends on Mg(2+) as a cofactor.

It is found in the cytoplasm. It carries out the reaction RNA(n+1) + phosphate = RNA(n) + a ribonucleoside 5'-diphosphate. Its function is as follows. Involved in mRNA degradation. Catalyzes the phosphorolysis of single-stranded polyribonucleotides processively in the 3'- to 5'-direction. The sequence is that of Polyribonucleotide nucleotidyltransferase from Deinococcus deserti (strain DSM 17065 / CIP 109153 / LMG 22923 / VCD115).